The chain runs to 338 residues: Methionine import ATP-binding protein MetN 2 (338 aa).

Residues 2–242 (IEIEKVCVDF…PQHAFTQQLV (241 aa)) form the ABC transporter domain. 39-46 (GTSGAGKS) contacts ATP.

Belongs to the ABC transporter superfamily. Methionine importer (TC 3.A.1.24) family. As to quaternary structure, the complex is composed of two ATP-binding proteins (MetN), two transmembrane proteins (MetI) and a solute-binding protein (MetQ).

It localises to the cell inner membrane. It catalyses the reaction L-methionine(out) + ATP + H2O = L-methionine(in) + ADP + phosphate + H(+). It carries out the reaction D-methionine(out) + ATP + H2O = D-methionine(in) + ADP + phosphate + H(+). In terms of biological role, part of the ABC transporter complex MetNIQ involved in methionine import. Responsible for energy coupling to the transport system. The polypeptide is Methionine import ATP-binding protein MetN 2 (Salmonella choleraesuis (strain SC-B67)).